We begin with the raw amino-acid sequence, 442 residues long: MAIFYSEKTAKQTAKNCCKTTARQIVNIHSLDYQGLDVAKINGKTWFIENALPNEQVLIHVIEEKRQYGRAKANKILQASPLRQQPSCISYPQCGGCQMQHIKLDVQRQTKQQAFFKQLQRLQTEPIDWQPMISGQDKHYRRRTKLSMAIQRNQLVIGFRQQNTHQIIPLTDCEVLEQPLSTLLPKLQHLFAGWKMKKALGHIELVNADNTRAMLVLHIGKINAQDQHMLLNFAKAEQLSLYLMCDENHIEHLCGEAPYYQINGLTLHFCIRDFIQVNQPLNQKMVNKALEWLAITAEDRILDLFCGIGNFSLPIAQQAGFVVGVEGVEEMVKQAKINQQTSGLNNIAFYQTNLAESFVDQHWATQPFNKVLLDPARQGALFCLDHLMALTPERIIYISCNPATLMRDAEKLIRHGYKIAKSAVIDMFPHTGHLESISMFIK.

Residues A10–K75 enclose the TRAM domain. Positions 88, 94, 97, and 173 each coordinate [4Fe-4S] cluster. S-adenosyl-L-methionine contacts are provided by Q276, F305, N310, E326, N353, and D374. Residue C400 is the Nucleophile of the active site.

This sequence belongs to the class I-like SAM-binding methyltransferase superfamily. RNA M5U methyltransferase family. RlmD subfamily.

It catalyses the reaction uridine(1939) in 23S rRNA + S-adenosyl-L-methionine = 5-methyluridine(1939) in 23S rRNA + S-adenosyl-L-homocysteine + H(+). Functionally, catalyzes the formation of 5-methyl-uridine at position 1939 (m5U1939) in 23S rRNA. This chain is 23S rRNA (uracil(1939)-C(5))-methyltransferase RlmD, found in Haemophilus ducreyi (strain 35000HP / ATCC 700724).